The sequence spans 502 residues: Cardiolipin synthase (502 aa).

A run of 3 helical transmembrane segments spans residues 7 to 27, 29 to 49, and 59 to 79; these read VAIL…YWGG, LLGI…FVIS, and IAWL…YLLF. PLD phosphodiesterase domains are found at residues 237 to 264 and 415 to 442; these read INFR…GDEY and EKGF…DMRS. Catalysis depends on residues histidine 242, lysine 244, aspartate 249, histidine 420, lysine 422, and aspartate 427.

Belongs to the phospholipase D family. Cardiolipin synthase subfamily.

Its subcellular location is the cell membrane. The enzyme catalyses 2 a 1,2-diacyl-sn-glycero-3-phospho-(1'-sn-glycerol) = a cardiolipin + glycerol. Functionally, catalyzes the reversible phosphatidyl group transfer from one phosphatidylglycerol molecule to another to form cardiolipin (CL) (diphosphatidylglycerol) and glycerol. The sequence is that of Cardiolipin synthase (cls) from Geobacillus thermodenitrificans (strain NG80-2).